A 337-amino-acid chain; its full sequence is Cytoskeleton protein RodZ (337 aa).

The Cytoplasmic portion of the chain corresponds to Met1 to Gly111. The HTH cro/C1-type domain maps to Leu19–Leu71. The H-T-H motif DNA-binding region spans Gln30–Glu49. Residues Trp112 to Trp132 form a helical; Signal-anchor for type II membrane protein membrane-spanning segment. At Trp133–Gln337 the chain is on the periplasmic side. The segment covering Thr145–Asn167 has biased composition (polar residues). Residues Thr145–Ala236 form a disordered region. Residues Thr168–Gln207 show a composition bias toward low complexity. The segment covering Asn208–Val218 has biased composition (polar residues). A compositionally biased stretch (low complexity) spans Asp219–Ala236.

Belongs to the RodZ family.

The protein localises to the cell inner membrane. In terms of biological role, cytoskeletal protein that is involved in cell-shape control through regulation of the length of the long axis. In Escherichia coli O9:H4 (strain HS), this protein is Cytoskeleton protein RodZ.